Consider the following 543-residue polypeptide: Heparanase-like protein 1 (543 aa).

A signal peptide spans 1–24 (MGFRVCVIVVFLGCLLLVPEKTMA). N184 is a glycosylation site (N-linked (GlcNAc...) asparagine). The active-site Proton donor is the E201. N-linked (GlcNAc...) asparagine glycosylation occurs at N304. E320 (nucleophile) is an active-site residue. N-linked (GlcNAc...) asparagine glycosylation is found at N425 and N428.

This sequence belongs to the glycosyl hydrolase 79 family.

It is found in the lysosome membrane. It localises to the secreted. Endoglycosidase which is a cell surface and extracellular matrix-degrading enzyme. Cleaves heparan sulfate proteoglycans (HSPGs) into heparan sulfate side chains and core proteoglycans. This chain is Heparanase-like protein 1, found in Arabidopsis thaliana (Mouse-ear cress).